The chain runs to 964 residues: Integrator complex subunit 4 (964 aa).

Lys-27 bears the N6-acetyllysine mark. HEAT repeat units lie at residues 67 to 106 (AESVEGVVRILLEHYYKENDPSVRLKIASLLGLLSKTAGF), 146 to 184 (QATQVRLVDVACKHLTDTSHGVRNKCLQLLGNLGSLEKS), 191 to 229 (GSAARDVQKIIGDHFSDQDPRVRTAAIKAMLQLHERGLK), 230 to 264 (LHQTIYNQACKLLSDDYEQVRSAAVQLIWVVSQLY), 278 to 314 (IRLVDDAFGKICHMVSDGSWVVRVQAAKLLGSMEQVS), 370 to 406 (NLIESGACGAFVHGLEDEMYEVRIAAVEALCMLAQSS), 407 to 445 (PSFAEKCLDFLVDMFNDEIEEVRLQSIHTMRKISNNITL), and 447 to 485 (EDQLDTVLAVLEDSSRDIREALHELLCCTNVSTKEGIHL). Lys-792 participates in a covalent cross-link: Glycyl lysine isopeptide (Lys-Gly) (interchain with G-Cter in SUMO1); alternate. A Glycyl lysine isopeptide (Lys-Gly) (interchain with G-Cter in SUMO2); alternate cross-link involves residue Lys-792.

The protein belongs to the Integrator subunit 4 family. In terms of assembly, component of the Integrator complex, composed of core subunits INTS1, INTS2, INTS3, INTS4, INTS5, INTS6, INTS7, INTS8, INTS9/RC74, INTS10, INTS11/CPSF3L, INTS12, INTS13, INTS14 and INTS15. The core complex associates with protein phosphatase 2A subunits PPP2CA and PPP2R1A, to form the Integrator-PP2A (INTAC) complex. INTS4 is part of the RNA endonuclease subcomplex, composed of INTS4, INTS9, INTS11 and inositol hexakisphosphate (InsP6). Interacts with BRAT1; interaction is required for the assembly of the RNA endonuclease subcomplex.

It is found in the nucleus. The protein localises to the cytoplasm. In terms of biological role, component of the integrator complex, a multiprotein complex that terminates RNA polymerase II (Pol II) transcription in the promoter-proximal region of genes. The integrator complex provides a quality checkpoint during transcription elongation by driving premature transcription termination of transcripts that are unfavorably configured for transcriptional elongation: the complex terminates transcription by (1) catalyzing dephosphorylation of the C-terminal domain (CTD) of Pol II subunit POLR2A/RPB1 and SUPT5H/SPT5, (2) degrading the exiting nascent RNA transcript via endonuclease activity and (3) promoting the release of Pol II from bound DNA. The integrator complex is also involved in terminating the synthesis of non-coding Pol II transcripts, such as enhancer RNAs (eRNAs), small nuclear RNAs (snRNAs), telomerase RNAs and long non-coding RNAs (lncRNAs). Within the integrator complex, INTS4 acts as an scaffold that links INTS9 and INTS11. Mediates recruitment of cytoplasmic dynein to the nuclear envelope, probably as component of the integrator complex. This chain is Integrator complex subunit 4 (Ints4), found in Mus musculus (Mouse).